A 393-amino-acid chain; its full sequence is Dual specificity mitogen-activated protein kinase kinase 1 (393 aa).

A disordered region spans residues 1–27 (MPKKKPTPIQLNPAPDGSAVNGTSSAE). Positions 68 to 361 (FEKISELGAG…LKQLMVHAFI (294 aa)) constitute a Protein kinase domain. Residues 74-82 (LGAGNGGVV), Lys-97, 143-146 (MEHM), and 150-153 (SLDQ) each bind ATP. Lys-97 contacts U0126. 144–146 (EHM) is a binding site for K-252a. The active-site Proton acceptor is Asp-190. ATP is bound by residues 192–195 (KPSN) and Asp-208. Ser-194 provides a ligand contact to K-252a. 208–211 (DFGV) provides a ligand contact to U0126. 2 positions are modified to phosphoserine; by BRAF and RAF1: Ser-218 and Ser-222. The interval 270-307 (ELELMFGCQVEGDAAETPPRPRTPGRPLSSYGMDSRPP) is RAF1-binding. Phosphothreonine is present on Thr-286. Thr-292 carries the phosphothreonine; by MAPK1 modification. Ser-298 is modified (phosphoserine; by PAK).

It belongs to the protein kinase superfamily. STE Ser/Thr protein kinase family. MAP kinase kinase subfamily. As to quaternary structure, found in a complex with at least BRAF, HRAS, MAP2K1, MAPK3/ERK1 and RGS14. Forms a heterodimer with MAP2K2/MEK2. Forms heterodimers with KSR2 which further dimerize to form tetramers. Interacts with KSR1 or KSR2 and BRAF; the interaction with KSR1 or KSR2 mediates KSR1-BRAF or KSR2-BRAF dimerization. Interacts with ARBB2, LAMTOR3 and RAF1. Interacts with MAPK1/ERK2. Interacts with MORG1. Interacts with PPARG. Interacts with isoform 1 of VRK2. Interacts with SGK1. Interacts with BIRC6/bruce. Interacts with KAT7; the interaction promotes KAT7 phosphorylation. Interacts with RAF1 and NEK10; the interaction is required for ERK1/2-signaling pathway activation in response to UV irradiation. Interacts with TRAF3IP3. Interacts with MOS. (Microbial infection) Interacts with Yersinia YopJ. Phosphorylation at Ser-218 and Ser-222 by MAP kinase kinase kinases (BRAF or MEKK1) positively regulates kinase activity. Also phosphorylated at Thr-292 by MAPK1/ERK2 and at Ser-298 by PAK. MAPK1/ERK2 phosphorylation of Thr-292 occurs in response to cellular adhesion and leads to inhibition of Ser-298 phosphorylation by PAK. Autophosphorylated at Ser-218 and Ser-222, autophosphosphorylation is promoted by NEK10 following UV irradiation. Post-translationally, (Microbial infection) Acetylation by Yersinia YopJ prevents phosphorylation and activation, thus blocking the MAPK signaling pathway. Widely expressed, with extremely low levels in brain.

The protein localises to the cytoplasm. Its subcellular location is the cytoskeleton. It localises to the microtubule organizing center. It is found in the centrosome. The protein resides in the spindle pole body. The protein localises to the nucleus. Its subcellular location is the membrane. It carries out the reaction L-seryl-[protein] + ATP = O-phospho-L-seryl-[protein] + ADP + H(+). The catalysed reaction is L-threonyl-[protein] + ATP = O-phospho-L-threonyl-[protein] + ADP + H(+). The enzyme catalyses L-tyrosyl-[protein] + ATP = O-phospho-L-tyrosyl-[protein] + ADP + H(+). With respect to regulation, ras proteins such as HRAS mediate the activation of RAF proteins such as RAF1 or BRAF which in turn activate extracellular signal-regulated kinases (ERK) through MAPK (mitogen-activated protein kinases) and ERK kinases MAP2K1/MEK1 and MAP2K2/MEK2. Activation occurs through phosphorylation of Ser-218 and Ser-222. MAP2K1/MEK1 binds KSR1 or KSR2 releasing the inhibitory intramolecular interaction between KSR1 or KSR2 protein kinase and N-terminal domains. This allows KSR1 or KSR2 dimerization with BRAF leading to BRAF activation and phosphorylation of MAP2K1. MAP2K1/MEK1 is also the target of negative feed-back regulation by its substrate kinases, such as MAPK1/ERK2. These phosphorylate MAP2K1/MEK1 on Thr-292, thereby facilitating dephosphorylation of the activating residues Ser-218 and Ser-222. Inhibited by serine/threonine phosphatase 2A. Many inhibitors have been identified including pyrrole derivatives, TAK-733 (one of a series of 8-methylpyrido[2,3-d]pyrimidine-4,7(3H,8H)-dione derivatives), CH4987655 and RDEA119/BAY 869766. Functionally, dual specificity protein kinase which acts as an essential component of the MAP kinase signal transduction pathway. Binding of extracellular ligands such as growth factors, cytokines and hormones to their cell-surface receptors activates RAS and this initiates RAF1 activation. RAF1 then further activates the dual-specificity protein kinases MAP2K1/MEK1 and MAP2K2/MEK2. Both MAP2K1/MEK1 and MAP2K2/MEK2 function specifically in the MAPK/ERK cascade, and catalyze the concomitant phosphorylation of a threonine and a tyrosine residue in a Thr-Glu-Tyr sequence located in the extracellular signal-regulated kinases MAPK3/ERK1 and MAPK1/ERK2, leading to their activation and further transduction of the signal within the MAPK/ERK cascade. Activates BRAF in a KSR1 or KSR2-dependent manner; by binding to KSR1 or KSR2 releases the inhibitory intramolecular interaction between KSR1 or KSR2 protein kinase and N-terminal domains which promotes KSR1 or KSR2-BRAF dimerization and BRAF activation. Depending on the cellular context, this pathway mediates diverse biological functions such as cell growth, adhesion, survival and differentiation, predominantly through the regulation of transcription, metabolism and cytoskeletal rearrangements. One target of the MAPK/ERK cascade is peroxisome proliferator-activated receptor gamma (PPARG), a nuclear receptor that promotes differentiation and apoptosis. MAP2K1/MEK1 has been shown to export PPARG from the nucleus. The MAPK/ERK cascade is also involved in the regulation of endosomal dynamics, including lysosome processing and endosome cycling through the perinuclear recycling compartment (PNRC), as well as in the fragmentation of the Golgi apparatus during mitosis. This Homo sapiens (Human) protein is Dual specificity mitogen-activated protein kinase kinase 1.